Here is a 402-residue protein sequence, read N- to C-terminus: Zinc finger protein 322 (402 aa).

The C2H2-type 1; atypical zinc finger occupies 43-65 (YQCLECKQNFCENLALIMCERTH). 8 consecutive C2H2-type zinc fingers follow at residues 71–93 (YKCD…QRIH), 99–121 (YKCS…QRTH), 127–149 (YTCD…QRSH), 155–177 (YLCS…RRTH), 183–205 (FKCL…QRTH), 211–233 (YKCN…KRVH), 239–261 (YKCG…QRVH), and 267–289 (YKCL…QATH). Residues 293 to 315 (FKCLEYEKSFNCSSDLIVHQRIH) form a C2H2-type 10; degenerate zinc finger. The C2H2-type 11; degenerate zinc-finger motif lies at 351–373 (YKYTVCDKSFHQSSALLQHQTVH). Residue S391 is modified to Phosphoserine.

The protein belongs to the krueppel C2H2-type zinc-finger protein family. As to quaternary structure, interacts with POU5F1.

The protein resides in the cytoplasm. The protein localises to the nucleus. Functionally, transcriptional activator. Important for maintenance of pluripotency in embryonic stem cells. Binds directly to the POU5F1 distal enhancer and the NANOG proximal promoter, and enhances expression of both genes. Can also bind to numerous other gene promoters and regulates expression of many other pluripotency factors, either directly or indirectly. Promotes inhibition of MAPK signaling during embryonic stem cell differentiation. The sequence is that of Zinc finger protein 322 (ZNF322) from Macaca fascicularis (Crab-eating macaque).